The primary structure comprises 130 residues: Small ribosomal subunit protein uS11 (130 aa).

This sequence belongs to the universal ribosomal protein uS11 family. As to quaternary structure, part of the 30S ribosomal subunit. Interacts with proteins S7 and S18. Binds to IF-3.

In terms of biological role, located on the platform of the 30S subunit, it bridges several disparate RNA helices of the 16S rRNA. Forms part of the Shine-Dalgarno cleft in the 70S ribosome. This Campylobacter curvus (strain 525.92) protein is Small ribosomal subunit protein uS11.